We begin with the raw amino-acid sequence, 123 residues long: uncharacterized protein (123 aa).

The stretch at 36 to 76 (VDRQENKKEFLSAEEAREKFKELINQVRSWKEQMSTLSKYA) forms a coiled coil.

This is an uncharacterized protein from Aquifex aeolicus (strain VF5).